Consider the following 63-residue polypeptide: Hypoxia-inducible lipid droplet-associated protein (63 aa).

A required for targeting to lipid droplets region spans residues 1-37; the sequence is MKHVLNLYLLGVVLTLLSIFVRVMESLEGLLESPSPG. Residues 7 to 23 traverse the membrane as a helical segment; that stretch reads LYLLGVVLTLLSIFVRV. The disordered stretch occupies residues 31-63; that stretch reads LESPSPGTSWTTRSQLANTEPTKGLPDHPSRSM. The span at 35–51 shows a compositional bias: polar residues; it reads SPGTSWTTRSQLANTEP. Ser44 bears the Phosphoserine mark.

As to expression, highly expressed in renal cell carcinoma cells but barely detectable in adjacent normal kidney tissue. Detected in some cervical and endometrial cancers. Expression also detected in fetal kidney with little or no expression observed in normal adult heart, liver, lung, pancreas, prostate or spinal cord (at protein level).

Its subcellular location is the lipid droplet. The protein resides in the secreted. It is found in the membrane. Functionally, increases intracellular lipid accumulation. Stimulates expression of cytokines including IL6, MIF and VEGFA. Enhances cell growth and proliferation. This Homo sapiens (Human) protein is Hypoxia-inducible lipid droplet-associated protein (HILPDA).